We begin with the raw amino-acid sequence, 129 residues long: Glycine cleavage system H protein (129 aa).

Positions 24 to 106 constitute a Lipoyl-binding domain; sequence SYTVGITEHA…YGEGWFFRVM (83 aa). Lysine 65 carries the N6-lipoyllysine modification.

The protein belongs to the GcvH family. The glycine cleavage system is composed of four proteins: P, T, L and H. The cofactor is (R)-lipoate.

Its function is as follows. The glycine cleavage system catalyzes the degradation of glycine. The H protein shuttles the methylamine group of glycine from the P protein to the T protein. The sequence is that of Glycine cleavage system H protein from Shewanella oneidensis (strain ATCC 700550 / JCM 31522 / CIP 106686 / LMG 19005 / NCIMB 14063 / MR-1).